Reading from the N-terminus, the 588-residue chain is Autophagy-related protein 22-1 (588 aa).

A helical transmembrane segment spans residues Y35–L55. N-linked (GlcNAc...) asparagine glycosylation is present at N84. The next 3 helical transmembrane spans lie at T109–I129, L144–P164, and L168–L188. A glycan (N-linked (GlcNAc...) asparagine) is linked at N255. 8 consecutive transmembrane segments (helical) span residues G270–V290, L301–L321, I365–T385, A399–W419, I434–P454, F471–G493, L507–T527, and A536–A556.

This sequence belongs to the ATG22 family.

It localises to the vacuole membrane. In terms of biological role, vacuolar effluxer which mediate the efflux of amino acids resulting from autophagic degradation. The release of autophagic amino acids allows the maintenance of protein synthesis and viability during nitrogen starvation. This Emericella nidulans (strain FGSC A4 / ATCC 38163 / CBS 112.46 / NRRL 194 / M139) (Aspergillus nidulans) protein is Autophagy-related protein 22-1 (atg22-1).